Reading from the N-terminus, the 266-residue chain is UPF0294 protein YafD (266 aa).

Belongs to the UPF0294 family.

The protein localises to the cytoplasm. In Salmonella agona (strain SL483), this protein is UPF0294 protein YafD.